Consider the following 146-residue polypeptide: Transcriptional regulator MraZ (146 aa).

2 SpoVT-AbrB domains span residues 7 to 54 (HVTN…GPEL) and 83 to 126 (GVYV…DPQA).

This sequence belongs to the MraZ family. In terms of assembly, forms oligomers.

It is found in the cytoplasm. The protein resides in the nucleoid. The protein is Transcriptional regulator MraZ of Rhizobium meliloti (strain 1021) (Ensifer meliloti).